The primary structure comprises 463 residues: ATP synthase subunit beta (463 aa).

152-159 serves as a coordination point for ATP; it reads GGAGVGKT.

Belongs to the ATPase alpha/beta chains family. As to quaternary structure, F-type ATPases have 2 components, CF(1) - the catalytic core - and CF(0) - the membrane proton channel. CF(1) has five subunits: alpha(3), beta(3), gamma(1), delta(1), epsilon(1). CF(0) has three main subunits: a(1), b(2) and c(9-12). The alpha and beta chains form an alternating ring which encloses part of the gamma chain. CF(1) is attached to CF(0) by a central stalk formed by the gamma and epsilon chains, while a peripheral stalk is formed by the delta and b chains.

It localises to the cell inner membrane. The catalysed reaction is ATP + H2O + 4 H(+)(in) = ADP + phosphate + 5 H(+)(out). In terms of biological role, produces ATP from ADP in the presence of a proton gradient across the membrane. The catalytic sites are hosted primarily by the beta subunits. The polypeptide is ATP synthase subunit beta (Shewanella sp. (strain MR-7)).